Here is a 503-residue protein sequence, read N- to C-terminus: Asparagine--tRNA ligase (503 aa).

The protein belongs to the class-II aminoacyl-tRNA synthetase family. Homodimer.

It is found in the cytoplasm. It catalyses the reaction tRNA(Asn) + L-asparagine + ATP = L-asparaginyl-tRNA(Asn) + AMP + diphosphate + H(+). This Aster yellows witches'-broom phytoplasma (strain AYWB) protein is Asparagine--tRNA ligase.